The primary structure comprises 262 residues: NADPH-dependent 7-cyano-7-deazaguanine reductase (262 aa).

69-71 is a substrate binding site; the sequence is IES. 71–72 is a binding site for NADPH; the sequence is SK. The active-site Thioimide intermediate is Cys-170. Residue Asp-177 is the Proton donor of the active site. 209 to 210 lines the substrate pocket; it reads HE. 238–239 contributes to the NADPH binding site; the sequence is RG.

Belongs to the GTP cyclohydrolase I family. QueF type 2 subfamily. In terms of assembly, homodimer.

The protein resides in the cytoplasm. It catalyses the reaction 7-aminomethyl-7-carbaguanine + 2 NADP(+) = 7-cyano-7-deazaguanine + 2 NADPH + 3 H(+). It participates in tRNA modification; tRNA-queuosine biosynthesis. Catalyzes the NADPH-dependent reduction of 7-cyano-7-deazaguanine (preQ0) to 7-aminomethyl-7-deazaguanine (preQ1). The chain is NADPH-dependent 7-cyano-7-deazaguanine reductase from Buchnera aphidicola subsp. Schizaphis graminum (strain Sg).